We begin with the raw amino-acid sequence, 109 residues long: Toxin YpjF (109 aa).

This sequence belongs to the CbtA/YkfI/YpjF toxin family. Interacts with FtsZ but not MreB. Another group finds interaction with FtsZ and MreB.

Its function is as follows. Toxic component of a type IV toxin-antitoxin (TA) system. Acts as a dual toxin inhibitor that blocks cell division and cell elongation in genetically separable interactions with FtsZ and MreB. Overexpression results in inhibition of growth in liquid cultures. Overexpression leads to formation of lemon-shaped cells; inactivated by overexpression of cognate antitoxin YfjZ but not when the 2 genes are coexpressed from the same plasmid. Also neutralized by overexpression of non-cognate antitoxins YafW and CbeA. The chain is Toxin YpjF (ypjF) from Escherichia coli (strain K12).